The primary structure comprises 152 residues: Deoxyuridine 5'-triphosphate nucleotidohydrolase (152 aa).

Substrate contacts are provided by residues 63–65, asparagine 76, and 80–82; these read RSG and TID. The interval 129–152 is disordered; it reads LDDTERGQGGYGSTGVSAMPPVDG.

The protein belongs to the dUTPase family. Mg(2+) serves as cofactor.

The catalysed reaction is dUTP + H2O = dUMP + diphosphate + H(+). Its pathway is pyrimidine metabolism; dUMP biosynthesis; dUMP from dCTP (dUTP route): step 2/2. Functionally, this enzyme is involved in nucleotide metabolism: it produces dUMP, the immediate precursor of thymidine nucleotides and it decreases the intracellular concentration of dUTP so that uracil cannot be incorporated into DNA. The polypeptide is Deoxyuridine 5'-triphosphate nucleotidohydrolase (Cutibacterium acnes (strain DSM 16379 / KPA171202) (Propionibacterium acnes)).